The sequence spans 899 residues: MTDKSIKELALSVGRPVEKLLEQVREAGLPQRTANDIITTEQQDTLVNHLKKIHGQESGAGKITLKRKTTSTAKVASTSGKAKTINVEVRKKHTFTKPNPEQIAAEAKARQETEERTRPQEQPRQAPQQQMRDESENKAQATLNAMRAAQQKETAKTTSTTTEVVVKRKSTNKPIKPVNVKQVETAEQRKAREAEAAKLKAVEETARRKAAEEAQQRTLEQMRKMASKYSTEETGATIRVIDDSPLAAGLVGQAYEDSFNQEDREIKRGGATNPRGQKKGGRNNQEEQSFKSHHKRGLKTSQANKHGFEKPVKKQVYDVEIGSTIVVADLAQKMAIKVREVIKTLMKMGELVTQNQSIDQDTAALVVEEMGHNPILVSDTQAEDNLLEAAEEARGEQTTRPPVVTIMGHVDHGKTSLLDRIRRSKVAAGEAGGITQHIGAYHVETDKGIITFLDTPGHAAFTAMRSRGAKATDIVVLVVAADDGVMPQTAEAIDHARAAGTPIIVAINKMDKESADPDRVLNELTTKQIVPEQWGGDVPVAMVSAHSGQGIDELLDLILIQSELMELKASGEGAAQGVVIEARVDKGRGAVTSILVQNGTLNIGDLVLAGSSYGRVRAMSDENGQPIKSAGPSIPVEILGLPDAPMAGDEVLVVNDEKKAREVADARADRERQKRIERQSAMRLENIMASMGKKDVPTVNVVLKADVRGTLEALTAALNELSMDEVRVRVISSGVGAITESDVTLAESSEAVLLGFNVRADTTARQKSDQDGIDIRYYSIIYELIDDVKNAMSGKLAPEHRETILGVAEVREVFHSSKFGAAAGCMVLEGMLHRNKPIRVLRDDVVVFQGELESLRRYKEVVEEVRAGMECGLAVKGYKDIKAKDKIEVYDVQLIKRSL.

2 disordered regions span residues 94–167 and 259–309; these read TFTK…VVVK and FNQE…HGFE. Residues 107-121 show a composition bias toward basic and acidic residues; the sequence is AKARQETEERTRPQE. Low complexity predominate over residues 147 to 164; that stretch reads RAAQQKETAKTTSTTTEV. The tr-type G domain occupies 399-568; the sequence is TRPPVVTIMG…LIQSELMELK (170 aa). The interval 408 to 415 is G1; sequence GHVDHGKT. 408–415 is a GTP binding site; sequence GHVDHGKT. Residues 433 to 437 are G2; the sequence is GITQH. The G3 stretch occupies residues 454 to 457; the sequence is DTPG. GTP is bound by residues 454-458 and 508-511; these read DTPGH and NKMD. A G4 region spans residues 508-511; sequence NKMD. The G5 stretch occupies residues 544-546; it reads SAH.

The protein belongs to the TRAFAC class translation factor GTPase superfamily. Classic translation factor GTPase family. IF-2 subfamily.

Its subcellular location is the cytoplasm. Functionally, one of the essential components for the initiation of protein synthesis. Protects formylmethionyl-tRNA from spontaneous hydrolysis and promotes its binding to the 30S ribosomal subunits. Also involved in the hydrolysis of GTP during the formation of the 70S ribosomal complex. The protein is Translation initiation factor IF-2 of Acinetobacter baylyi (strain ATCC 33305 / BD413 / ADP1).